We begin with the raw amino-acid sequence, 154 residues long: Protein X (154 aa).

The segment at 68 to 117 (PCALRFTSARRMETTVNAHQVLPKVLYKRTLGLSAMSTTDLEAYFKDCLF) is mitochondrial targeting sequence.

The protein belongs to the orthohepadnavirus protein X family. As to quaternary structure, may form homodimer. May interact with host CEBPA, CFLAR, CREB1, DDB1, E4F1, HBXIP, HSPD1/HSP60, NFKBIA, POLR2E and SMAD4. Interacts with host SMC5-SMC6 complex and induces its degradation. Interacts with host TRPC4AP; leading to prevent ubiquitination of TRPC4AP. Interacts with host PLSCR1; this interaction promotes ubiquitination and degradation of HBx and impairs HBx-mediated cell proliferation. In terms of processing, a fraction may be phosphorylated in insect cells and HepG2 cells, a human hepatoblastoma cell line. Phosphorylated in vitro by host protein kinase C or mitogen-activated protein kinase. N-acetylated in insect cells.

The protein localises to the host cytoplasm. The protein resides in the host nucleus. It localises to the host mitochondrion. Multifunctional protein that plays a role in silencing host antiviral defenses and promoting viral transcription. Does not seem to be essential for HBV infection. May be directly involved in development of cirrhosis and liver cancer (hepatocellular carcinoma). Most of cytosolic activities involve modulation of cytosolic calcium. The effect on apoptosis is controversial depending on the cell types in which the studies have been conducted. May induce apoptosis by localizing in mitochondria and causing loss of mitochondrial membrane potential. May also modulate apoptosis by binding host CFLAR, a key regulator of the death-inducing signaling complex (DISC). Promotes viral transcription by using the host E3 ubiquitin ligase DDB1 to target the SMC5-SMC6 complex to proteasomal degradation. This host complex would otherwise bind to viral episomal DNA, and prevents its transcription. Moderately stimulates transcription of many different viral and cellular transcription elements. Promoters and enhancers stimulated by HBx contain DNA binding sites for NF-kappa-B, AP-1, AP-2, c-EBP, ATF/CREB, or the calcium-activated factor NF-AT. This is Protein X from Homo sapiens (Human).